Reading from the N-terminus, the 274-residue chain is Large ribosomal subunit protein uL2 (274 aa).

The interval 222–274 (GVAMNPVDHPHGGGEGRGKGHHPQSPWGQLAKGYKTRRGKKASDKLIVRRRNG) is disordered. Basic and acidic residues predominate over residues 229–239 (DHPHGGGEGRG).

This sequence belongs to the universal ribosomal protein uL2 family. Part of the 50S ribosomal subunit. Forms a bridge to the 30S subunit in the 70S ribosome.

One of the primary rRNA binding proteins. Required for association of the 30S and 50S subunits to form the 70S ribosome, for tRNA binding and peptide bond formation. It has been suggested to have peptidyltransferase activity; this is somewhat controversial. Makes several contacts with the 16S rRNA in the 70S ribosome. This is Large ribosomal subunit protein uL2 from Thermosipho melanesiensis (strain DSM 12029 / CIP 104789 / BI429).